The sequence spans 264 residues: uncharacterized protein (264 aa).

This is an uncharacterized protein from Escherichia coli (strain K12).